The sequence spans 1049 residues: Solvent-resistant pump membrane transporter SrpB (1049 aa).

The next 12 membrane-spanning stretches (helical) occupy residues 10 to 30 (IFAW…LAKM), 339 to 359 (SVVH…YLFL), 366 to 386 (LIPT…LPYF), 392 to 412 (VLTM…AIVV), 440 to 460 (GALV…AFFG), 470 to 490 (FAIT…VFTP), 542 to 562 (LAFL…PKAF), 871 to 891 (APLL…ALYE), 895 to 915 (VPVS…LATL), 927 to 947 (VGLM…VEFA), 973 to 993 (ILMT…ASGA), and 1008 to 1028 (GMIT…VVVV).

The protein belongs to the resistance-nodulation-cell division (RND) (TC 2.A.6) family.

The protein localises to the cell inner membrane. The inner membrane transporter component of an organic solvent efflux pump. Involved in export of a number of low log POW compounds including hexane (log POW 3.5), toluene (log POW 2.5) and dimethylphthalate (log POW 2.3). The solvent resistance phenotype has been postulated to depend on the operon expression level. The polypeptide is Solvent-resistant pump membrane transporter SrpB (srpB) (Pseudomonas putida (Arthrobacter siderocapsulatus)).